We begin with the raw amino-acid sequence, 173 residues long: Protein MOTHER of FT and TFL1 (173 aa).

Ala-2 carries the post-translational modification N-acetylalanine.

It belongs to the phosphatidylethanolamine-binding protein family. In terms of tissue distribution, expressed in gametophytes and developing seeds.

The protein localises to the cytoplasm. In terms of biological role, may form complexes with phosphorylated ligands by interfering with kinases and their effectors. Regulates seed germination via the abscisic acid (ABA) and gibberellic acid (GA)signaling pathways. During seed germination, MFT expression is directly repressed by ABI3 or promoted by ABI5 in the ABA signaling pathway. Involved in a negative feedback regulation of ABA signaling. Promotes embryo growth by direct repression of ABI5. In the GA signaling pathway, MFT expression is promoted by the DELLA protein RGL2 during seed germination. May regulate seed germination and fertility through the brassinosteroid (BR) signaling pathway. The sequence is that of Protein MOTHER of FT and TFL1 (MFT) from Arabidopsis thaliana (Mouse-ear cress).